The primary structure comprises 543 residues: Cytochrome P450 1B1 (543 aa).

Cysteine 470 provides a ligand contact to heme.

The protein belongs to the cytochrome P450 family. It depends on heme as a cofactor.

It localises to the endoplasmic reticulum membrane. It is found in the microsome membrane. Its subcellular location is the mitochondrion. The enzyme catalyses an organic molecule + reduced [NADPH--hemoprotein reductase] + O2 = an alcohol + oxidized [NADPH--hemoprotein reductase] + H2O + H(+). The catalysed reaction is 17beta-estradiol + reduced [NADPH--hemoprotein reductase] + O2 = 2-hydroxy-17beta-estradiol + oxidized [NADPH--hemoprotein reductase] + H2O + H(+). It carries out the reaction 17beta-estradiol + reduced [NADPH--hemoprotein reductase] + O2 = 4-hydroxy-17beta-estradiol + oxidized [NADPH--hemoprotein reductase] + H2O + H(+). It catalyses the reaction estrone + reduced [NADPH--hemoprotein reductase] + O2 = 2-hydroxyestrone + oxidized [NADPH--hemoprotein reductase] + H2O + H(+). The enzyme catalyses estrone + reduced [NADPH--hemoprotein reductase] + O2 = 4-hydroxyestrone + oxidized [NADPH--hemoprotein reductase] + H2O + H(+). The catalysed reaction is testosterone + reduced [NADPH--hemoprotein reductase] + O2 = 6beta,17beta-dihydroxyandrost-4-en-3-one + oxidized [NADPH--hemoprotein reductase] + H2O + H(+). It carries out the reaction progesterone + reduced [NADPH--hemoprotein reductase] + O2 = 6beta-hydroxyprogesterone + oxidized [NADPH--hemoprotein reductase] + H2O + H(+). It catalyses the reaction progesterone + reduced [NADPH--hemoprotein reductase] + O2 = 16alpha-hydroxyprogesterone + oxidized [NADPH--hemoprotein reductase] + H2O + H(+). The enzyme catalyses all-trans-retinol + reduced [NADPH--hemoprotein reductase] + O2 = all-trans-retinal + oxidized [NADPH--hemoprotein reductase] + 2 H2O + H(+). The catalysed reaction is all-trans-retinal + reduced [NADPH--hemoprotein reductase] + O2 = all-trans-retinoate + oxidized [NADPH--hemoprotein reductase] + H2O + 2 H(+). It carries out the reaction (5Z,8Z,11Z,14Z)-eicosatetraenoate + reduced [NADPH--hemoprotein reductase] + O2 = (8R,9S)-epoxy-(5Z,11Z,14Z)-eicosatrienoate + oxidized [NADPH--hemoprotein reductase] + H2O + H(+). It catalyses the reaction (5Z,8Z,11Z,14Z)-eicosatetraenoate + reduced [NADPH--hemoprotein reductase] + O2 = (11R,12S)-epoxy-(5Z,8Z,14Z)-eicosatrienoate + oxidized [NADPH--hemoprotein reductase] + H2O + H(+). The enzyme catalyses (5Z,8Z,11Z,14Z)-eicosatetraenoate + reduced [NADPH--hemoprotein reductase] + O2 = (11S,12R)-epoxy-(5Z,8Z,14Z)-eicosatrienoate + oxidized [NADPH--hemoprotein reductase] + H2O + H(+). The catalysed reaction is (5Z,8Z,11Z,14Z)-eicosatetraenoate + reduced [NADPH--hemoprotein reductase] + O2 = (14S,15R)-epoxy-(5Z,8Z,11Z)-eicosatrienoate + oxidized [NADPH--hemoprotein reductase] + H2O + H(+). It carries out the reaction (5Z,8Z,11Z,14Z)-eicosatetraenoate + reduced [NADPH--hemoprotein reductase] + O2 = (14R,15S)-epoxy-(5Z,8Z,11Z)-eicosatrienoate + oxidized [NADPH--hemoprotein reductase] + H2O + H(+). It catalyses the reaction (5S)-hydroperoxy-(6E,8Z,11Z,14Z)-eicosatetraenoate = 5-oxo-(6E,8Z,11Z,14Z)-eicosatetraenoate + H2O. The enzyme catalyses (12S)-hydroperoxy-(5Z,8Z,10E,14Z)-eicosatetraenoate = 12-oxo-(5Z,8Z,10E,14Z)-eicosatetraenoate + H2O. The catalysed reaction is (15S)-hydroperoxy-(5Z,8Z,11Z,13E)-eicosatetraenoate = 15-oxo-(5Z,8Z,11Z,13E)-eicosatetraenoate + H2O. It carries out the reaction (13S)-hydroperoxy-(9Z,11E)-octadecadienoate = 13-oxo-(9Z,11E)-octadecadienoate + H2O. It functions in the pathway steroid hormone biosynthesis. It participates in cofactor metabolism; retinol metabolism. Its pathway is lipid metabolism; arachidonate metabolism. With respect to regulation, enzyme activity is increased by cytochrome b5. Enzyme activity is increased by liposomes containing anionic phospholipids, phosphatidic acid and cardiolipin. Inhibited by naringenin with an IC(50) of 5 uM. Its function is as follows. A cytochrome P450 monooxygenase involved in the metabolism of various endogenous substrates, including fatty acids, steroid hormones and vitamins. Mechanistically, uses molecular oxygen inserting one oxygen atom into a substrate, and reducing the second into a water molecule, with two electrons provided by NADPH via cytochrome P450 reductase (NADPH--hemoprotein reductase). Exhibits catalytic activity for the formation of hydroxyestrogens from 17beta-estradiol (E2), namely 2- and 4-hydroxy E2. Metabolizes testosterone and progesterone to B or D ring hydroxylated metabolites. May act as a major enzyme for all-trans retinoic acid biosynthesis in extrahepatic tissues. Catalyzes two successive oxidative transformation of all-trans retinol to all-trans retinal and then to the active form all-trans retinoic acid. Catalyzes the epoxidation of double bonds of certain PUFA. Converts arachidonic acid toward epoxyeicosatrienoic acid (EpETrE) regioisomers, 8,9-, 11,12-, and 14,15- EpETrE, that function as lipid mediators in the vascular system. Additionally, displays dehydratase activity toward oxygenated eicosanoids including hydroperoxyeicosatetraenoates (HpETEs). This activity is independent of cytochrome P450 reductase, NADPH, and O2. Also involved in the oxidative metabolism of xenobiotics, particularly converting polycyclic aromatic hydrocarbons and heterocyclic aryl amines procarcinogens to DNA-damaging products. Plays an important role in retinal vascular development. Under ambient/hyperoxic O2 conditions, promotes angiogenesis and capillary morphogenesis of retinal endothelial cells and pericytes, likely by metabolizing the oxygenated products symptomatic of oxidative stress. Also, contributes to oxidative homeostasis and ultrastructural organization and function of trabecular meshwork tissue through modulation of POSTN expression. The sequence is that of Cytochrome P450 1B1 from Rattus norvegicus (Rat).